Reading from the N-terminus, the 168-residue chain is uncharacterized protein (168 aa).

A helical membrane pass occupies residues 5 to 24 (IAWASACLLLVMLTGFFTIG).

It localises to the membrane. This is an uncharacterized protein from Bacillus subtilis (strain 168).